The sequence spans 429 residues: uncharacterized protein (429 aa).

Basic and acidic residues predominate over residues 1 to 12; sequence MSDSKEDIRNGQ. Disordered regions lie at residues 1–63, 257–306, and 320–429; these read MSDS…APEA, RSRA…SDRM, and YRGY…SDSE. The span at 328-362 shows a compositional bias: acidic residues; it reads EENEEDDLGDFIAEEEEEEEQEEEQEEDEEDEEEV. Over residues 369–378 the composition is skewed to basic and acidic residues; the sequence is KGFDADKEAS.

The protein belongs to the LEO1 family.

The protein resides in the nucleus. This is an uncharacterized protein from Schizosaccharomyces pombe (strain 972 / ATCC 24843) (Fission yeast).